Consider the following 100-residue polypeptide: Large ribosomal subunit protein bL27 (100 aa).

A propeptide spanning residues 1 to 13 (MNKLYWLTDLQLF) is cleaved from the precursor. The interval 17 to 39 (KGVGSSKNGRDSNPKYLGAKLGD) is disordered.

It belongs to the bacterial ribosomal protein bL27 family. In terms of processing, the N-terminus is cleaved by ribosomal processing cysteine protease Prp.

This chain is Large ribosomal subunit protein bL27, found in Ureaplasma parvum serovar 3 (strain ATCC 700970).